The sequence spans 932 residues: Protocadherin gamma-A9 (932 aa).

The signal sequence occupies residues Met-1–Ala-28. 6 consecutive Cadherin domains span residues Ser-29–Phe-133, Gln-134–Phe-242, Ala-243–Val-347, Thr-348–Phe-452, Ser-453–Ile-562, and Asp-570–Asp-683. At Ser-29–Tyr-692 the chain is on the extracellular side. N-linked (GlcNAc...) asparagine glycosylation is found at Asn-47 and Asn-127. N-linked (GlcNAc...) asparagine glycosylation is found at Asn-389, Asn-419, and Asn-545. A helical membrane pass occupies residues Leu-693–Ala-713. The Cytoplasmic segment spans residues Leu-714 to Lys-932. 2 disordered regions span residues Asp-803 to Asn-841 and Ala-902 to Lys-932. A compositionally biased stretch (polar residues) spans Trp-816–Asn-841. Basic residues predominate over residues Asn-922–Lys-932.

The protein resides in the cell membrane. Its function is as follows. Potential calcium-dependent cell-adhesion protein. May be involved in the establishment and maintenance of specific neuronal connections in the brain. This is Protocadherin gamma-A9 (PCDHGA9) from Homo sapiens (Human).